A 134-amino-acid chain; its full sequence is Large ribosomal subunit protein eL14y (134 aa).

It belongs to the eukaryotic ribosomal protein eL14 family.

This Arabidopsis thaliana (Mouse-ear cress) protein is Large ribosomal subunit protein eL14y (RPL14B).